The following is a 134-amino-acid chain: Arsenate reductase (134 aa).

Active-site nucleophile residues include Cys-11, Cys-83, and Cys-90. Intrachain disulfides connect Cys-11–Cys-83 and Cys-83–Cys-90.

This sequence belongs to the low molecular weight phosphotyrosine protein phosphatase family. Thioredoxin-coupled ArsC subfamily.

The protein localises to the cytoplasm. The catalysed reaction is arsenate + [thioredoxin]-dithiol + H(+) = arsenite + [thioredoxin]-disulfide + H2O. Functionally, catalyzes the reduction of arsenate [As(V)] to arsenite [As(III)]. The chain is Arsenate reductase from Brevibacillus brevis (strain 47 / JCM 6285 / NBRC 100599).